The sequence spans 272 residues: Ribosomal RNA large subunit methyltransferase E (272 aa).

S-adenosyl-L-methionine-binding residues include G50, W52, D68, D84, and D109. K149 acts as the Proton acceptor in catalysis. A TRAM domain is found at 196 to 254 (PLRRGDKFVVDIEKLGSGGDGAVLIEGFVVFVKEVEVGEKVRIKIADVKPNFAFADVEE).

Belongs to the class I-like SAM-binding methyltransferase superfamily. RNA methyltransferase RlmE family.

The protein localises to the cytoplasm. The catalysed reaction is uridine(2552) in 23S rRNA + S-adenosyl-L-methionine = 2'-O-methyluridine(2552) in 23S rRNA + S-adenosyl-L-homocysteine + H(+). In terms of biological role, specifically methylates the uridine in position 2552 of 23S rRNA at the 2'-O position of the ribose in the fully assembled 50S ribosomal subunit. This Methanosarcina acetivorans (strain ATCC 35395 / DSM 2834 / JCM 12185 / C2A) protein is Ribosomal RNA large subunit methyltransferase E.